The sequence spans 206 residues: Thymidylate kinase (206 aa).

An ATP-binding site is contributed by 16-23 (GIDGTGKS).

This sequence belongs to the thymidylate kinase family.

It catalyses the reaction dTMP + ATP = dTDP + ADP. Phosphorylation of dTMP to form dTDP in both de novo and salvage pathways of dTTP synthesis. This chain is Thymidylate kinase, found in Akkermansia muciniphila (strain ATCC BAA-835 / DSM 22959 / JCM 33894 / BCRC 81048 / CCUG 64013 / CIP 107961 / Muc).